We begin with the raw amino-acid sequence, 293 residues long: Diaminopimelate epimerase (293 aa).

3 residues coordinate substrate: Asn-17, Gln-47, and Asn-67. Cys-76 functions as the Proton donor in the catalytic mechanism. Substrate-binding positions include 77-78 (GN), Asn-164, Asn-197, and 215-216 (ER). The active-site Proton acceptor is Cys-224. A substrate-binding site is contributed by 225–226 (GS).

Belongs to the diaminopimelate epimerase family. Homodimer.

Its subcellular location is the cytoplasm. The enzyme catalyses (2S,6S)-2,6-diaminopimelate = meso-2,6-diaminopimelate. It participates in amino-acid biosynthesis; L-lysine biosynthesis via DAP pathway; DL-2,6-diaminopimelate from LL-2,6-diaminopimelate: step 1/1. In terms of biological role, catalyzes the stereoinversion of LL-2,6-diaminopimelate (L,L-DAP) to meso-diaminopimelate (meso-DAP), a precursor of L-lysine and an essential component of the bacterial peptidoglycan. The polypeptide is Diaminopimelate epimerase (Rhodopseudomonas palustris (strain BisB5)).